A 96-amino-acid polypeptide reads, in one-letter code: HssA/B-like protein 25 (96 aa).

The protein belongs to the hssA/B family.

The sequence is that of HssA/B-like protein 25 (hssl25) from Dictyostelium discoideum (Social amoeba).